Consider the following 471-residue polypeptide: Putative multidrug resistance protein MdtD (471 aa).

Residues 1–11 (MTDLPDSTRWQ) lie on the Periplasmic side of the membrane. A helical transmembrane segment spans residues 12-32 (LWIVAFGFFMQSLDTTIVNTA). Over 33-48 (LPSMAQSLGESPLHMH) the chain is Cytoplasmic. Residues 49-69 (MVIVSYVLTVAVMLPASGWLA) traverse the membrane as a helical segment. Residues 70–76 (DKVGVRN) lie on the Periplasmic side of the membrane. The helical transmembrane segment at 77 to 97 (IFFTAIVLFTLGSLFCALSGT) threads the bilayer. At 98-101 (LNEL) the chain is on the cytoplasmic side. The helical transmembrane segment at 102–124 (LLARALQGVGGAMMVPVGRLTVM) threads the bilayer. The Periplasmic segment spans residues 125–137 (KIVPREQYMAAMT). A helical transmembrane segment spans residues 138-158 (FVTLPGQVGPLLGPALGGLLV). Over 159–164 (EYASWH) the chain is Cytoplasmic. A helical membrane pass occupies residues 165-185 (WIFLINIPVGIIGAIATLMLM). At 186–196 (PNYTMQTRRFD) the chain is on the periplasmic side. The chain crosses the membrane as a helical span at residues 197-217 (LSGFLLLAVGMAVLTLALDGS). Residues 218 to 224 (KGTGLSP) lie on the Cytoplasmic side of the membrane. A helical transmembrane segment spans residues 225 to 245 (LAIAGLVAVGVVALVLYLLHA). The Periplasmic portion of the chain corresponds to 246 to 262 (RNNNRALFSLKLFRTRT). The chain crosses the membrane as a helical span at residues 263–283 (FSLGLAGSFAGRIGSGMLPFM). The Cytoplasmic portion of the chain corresponds to 284-285 (TP). A helical membrane pass occupies residues 286–306 (VFLQIGLGFSPFHAGLMMIPM). The Periplasmic portion of the chain corresponds to 307 to 341 (VLGSMGMKRIVVQVVNRFGYRRVLVATTLGLSLVT). Residues 342–362 (LLFMTTALLGWYYVLPFVLFL) form a helical membrane-spanning segment. Topologically, residues 363–395 (QGMVNSTRFSSMNTLTLKDLPDNLASSGNSLLS) are cytoplasmic. Residues 396 to 416 (MIMQLSMSIGVTIAGLLLGLF) traverse the membrane as a helical segment. Topologically, residues 417-430 (GSQHVSIDSGTTQT) are periplasmic. Residues 431 to 451 (VFMYTWLSMALIIALPAFIFA) form a helical membrane-spanning segment. Over 452-471 (RVPNDTHQNVAISRRKRSAQ) the chain is Cytoplasmic.

It belongs to the major facilitator superfamily. TCR/Tet family.

The protein localises to the cell inner membrane. In Escherichia coli (strain 55989 / EAEC), this protein is Putative multidrug resistance protein MdtD.